A 634-amino-acid chain; its full sequence is TATA box-binding protein-associated factor RNA polymerase I subunit B (634 aa).

The RRN7-type zinc finger occupies 19 to 51 (LVCEYCGHGSEYAEDDADDGFFTCRQCSAIHTS). Zn(2+)-binding residues include Cys-21, Cys-24, Cys-42, and Cys-45. The B-reader stretch occupies residues 51–80 (STQNTATNPFDFPMTPAHLSAHRRPTQPTP). Residues 54-107 (NTATNPFDFPMTPAHLSAHRRPTQPTPTPKPFPAPRGAATGAAAPDFDDLGEPS) are disordered. The segment covering 77–87 (QPTPTPKPFPA) has biased composition (pro residues). Positions 81–83 (TPK) are B-linker. Positions 84 to 281 (PFPAPRGAAT…DKLLGSSLND (198 aa)) are N-terminal cyclin fold. Low complexity predominate over residues 88–98 (PRGAATGAAAP). Residues 282 to 284 (CPL) are C-terminal cyclin fold.

It belongs to the RRN7/TAF1B family.

It localises to the nucleus. It is found in the nucleolus. Component of RNA polymerase I core factor complex that acts as a GTF2B/TFIIB-like factor and plays a key role in multiple steps during transcription initiation such as pre-initiation complex (PIC) assembly and postpolymerase recruitment events in polymerase I (Pol I) transcription. Binds rDNA promoters and plays a role in Pol I recruitment. The chain is TATA box-binding protein-associated factor RNA polymerase I subunit B from Oryza sativa subsp. japonica (Rice).